A 276-amino-acid polypeptide reads, in one-letter code: Diaminopimelate epimerase (276 aa).

Substrate-binding residues include Asn13, Gln46, and Asn66. The active-site Proton donor is the Cys75. Substrate contacts are provided by residues 76-77 (GN), Asn159, Asn192, and 210-211 (ER). Cys219 serves as the catalytic Proton acceptor. Residue 220 to 221 (GT) participates in substrate binding.

This sequence belongs to the diaminopimelate epimerase family. As to quaternary structure, homodimer.

It localises to the cytoplasm. The enzyme catalyses (2S,6S)-2,6-diaminopimelate = meso-2,6-diaminopimelate. It participates in amino-acid biosynthesis; L-lysine biosynthesis via DAP pathway; DL-2,6-diaminopimelate from LL-2,6-diaminopimelate: step 1/1. In terms of biological role, catalyzes the stereoinversion of LL-2,6-diaminopimelate (L,L-DAP) to meso-diaminopimelate (meso-DAP), a precursor of L-lysine and an essential component of the bacterial peptidoglycan. This chain is Diaminopimelate epimerase, found in Pseudomonas aeruginosa (strain LESB58).